Reading from the N-terminus, the 128-residue chain is Sulfurtransferase TusD (128 aa).

Cys78 serves as the catalytic Cysteine persulfide intermediate.

Belongs to the DsrE/TusD family. In terms of assembly, heterohexamer, formed by a dimer of trimers. The hexameric TusBCD complex contains 2 copies each of TusB, TusC and TusD. The TusBCD complex interacts with TusE.

Its subcellular location is the cytoplasm. Part of a sulfur-relay system required for 2-thiolation of 5-methylaminomethyl-2-thiouridine (mnm(5)s(2)U) at tRNA wobble positions. Accepts sulfur from TusA and transfers it in turn to TusE. The sequence is that of Sulfurtransferase TusD from Shigella boydii serotype 18 (strain CDC 3083-94 / BS512).